The sequence spans 432 residues: Adenylosuccinate synthetase (432 aa).

Residues 13–19 (GDEGKGK) and 41–43 (GHT) each bind GTP. D14 (proton acceptor) is an active-site residue. 2 residues coordinate Mg(2+): D14 and G41. IMP contacts are provided by residues 14 to 17 (DEGK), 39 to 42 (NAGH), T130, R144, Q225, T240, and R304. The Proton donor role is filled by H42. 300–306 (AVTGRPR) provides a ligand contact to substrate. GTP is bound by residues R306, 332–334 (KLD), and 415–417 (STG).

It belongs to the adenylosuccinate synthetase family. Homodimer. The cofactor is Mg(2+).

The protein localises to the cytoplasm. It catalyses the reaction IMP + L-aspartate + GTP = N(6)-(1,2-dicarboxyethyl)-AMP + GDP + phosphate + 2 H(+). It functions in the pathway purine metabolism; AMP biosynthesis via de novo pathway; AMP from IMP: step 1/2. Plays an important role in the de novo pathway of purine nucleotide biosynthesis. Catalyzes the first committed step in the biosynthesis of AMP from IMP. The sequence is that of Adenylosuccinate synthetase from Haemophilus influenzae (strain ATCC 51907 / DSM 11121 / KW20 / Rd).